Reading from the N-terminus, the 197-residue chain is uncharacterized protein (197 aa).

4 consecutive transmembrane segments (helical) span residues 12 to 41 (LCIFGIGLFVPATGTFACGLLLVLGFWVLF), 78 to 100 (LIQGFFPLVRMMLCPYLFITALS), 120 to 142 (VGVFGIMIAGISLVRELVAFGCV), and 162 to 184 (IRFAATGAGTLISCGIVLWIFRS).

It localises to the cell membrane. This is an uncharacterized protein from Treponema pallidum (strain Nichols).